The chain runs to 498 residues: N-acyl-D-aspartate deacylase (498 aa).

A disordered region spans residues 478–498 (AERPGQVLAPGDAIPWSQQSE).

The protein belongs to the metallo-dependent hydrolases superfamily. N-acyl-D-amino-acid deacylase family. Zn(2+) serves as cofactor.

It localises to the cytoplasm. It catalyses the reaction an N-acyl-D-aspartate + H2O = D-aspartate + a carboxylate. The polypeptide is N-acyl-D-aspartate deacylase (Alcaligenes xylosoxydans xylosoxydans (Achromobacter xylosoxidans)).